A 101-amino-acid polypeptide reads, in one-letter code: MAKSSMKAREVKRAKLVAKFAEKRLALKAIINNPTTSDDDRWDAVLKLQGLPRDSSAARQRNRCSQTGRPHGYLRKFGLSRIKLREATMRGEVPGLRKASW.

This sequence belongs to the universal ribosomal protein uS14 family. Part of the 30S ribosomal subunit. Contacts proteins S3 and S10.

Functionally, binds 16S rRNA, required for the assembly of 30S particles and may also be responsible for determining the conformation of the 16S rRNA at the A site. In Shewanella woodyi (strain ATCC 51908 / MS32), this protein is Small ribosomal subunit protein uS14.